We begin with the raw amino-acid sequence, 727 residues long: BRCA1-A complex subunit RAP80 (727 aa).

The disordered stretch occupies residues 1–23 (MPRRKKKIKEASESQNLEKKDLE). Residues 1–101 (MPRRKKKIKE…SEQEAREVNN (101 aa)) form a necessary for transcriptional repression region. Residues 9 to 23 (KEASESQNLEKKDLE) are compositionally biased toward basic and acidic residues. Lys20 is covalently cross-linked (Glycyl lysine isopeptide (Lys-Gly) (interchain with G-Cter in SUMO2)). Residue Ser29 is modified to Phosphoserine. Lys31 is covalently cross-linked (Glycyl lysine isopeptide (Lys-Gly) (interchain with G-Cter in SUMO2)). Phosphoserine occurs at positions 44 and 46. Residues 45–70 (DSDGEETKEENGLQKTKTKQSNRSKC) form a disordered region. Thr51 is subject to Phosphothreonine. The span at 60 to 70 (TKTKQSNRSKC) shows a compositional bias: basic residues. Positions 60-78 (TKTKQSNRSKCLAKRKVAH) match the LR motif motif. Glycyl lysine isopeptide (Lys-Gly) (interchain with G-Cter in SUMO2) cross-links involve residues Lys75 and Lys90. 2 UIM domains span residues 80–99 (SEEEQFALALKMSEQEAREV) and 104–124 (EKEEELLRKAIAESLNSCWSS). A UIM-linker region spans residues 97-103 (REVNNQE). Positions 100–200 (NNQEEKEEEL…EEPVSGSSGS (101 aa)) are necessary for interaction with NR6A1 N-terminus. Positions 133–206 (PLAAELSSHS…SSGSWDQSSQ (74 aa)) are disordered. The residue at position 140 (Ser140) is a Phosphoserine. Residues 176-188 (AEQRKEPWDHNEN) are compositionally biased toward basic and acidic residues. Positions 195-206 (SGSSGSWDQSSQ) are enriched in low complexity. Residue Ser205 is modified to Phosphoserine. Residue Lys245 forms a Glycyl lysine isopeptide (Lys-Gly) (interchain with G-Cter in SUMO2) linkage. The segment at 270-400 (TGGTVHYYWG…EEEPTTSRGQ (131 aa)) is AIR. The tract at residues 326 to 427 (PRPPFLIQNE…SEGDNSVPTT (102 aa)) is disordered. Residues 355–364 (DEAKEERQES) show a composition bias toward basic and acidic residues. Ser379 is subject to Phosphoserine. Glycyl lysine isopeptide (Lys-Gly) (interchain with G-Cter in SUMO2) cross-links involve residues Lys382 and Lys387. The segment at 400-508 (QSSQGLFVEE…ENPPPAVSSS (109 aa)) is necessary for interaction with NR6A1 C-terminus. A Phosphoserine modification is found at Ser402. Lys436 is covalently cross-linked (Glycyl lysine isopeptide (Lys-Gly) (interchain with G-Cter in SUMO2)). The residue at position 474 (Ser474) is a Phosphoserine. A UBZ4-type zinc finger spans residues 510 to 537 (RVSCPLCNQDFPPTKIEQHAMYCNGLME). The Zn(2+) site is built by Cys513, Cys516, His528, and Cys532. Residues 513–590 (CPLCNQDFPP…GEYQCHVEAC (78 aa)) form a zinc-finger-like region region. Residues Lys552, Lys570, Lys595, and Lys617 each participate in a glycyl lysine isopeptide (Lys-Gly) (interchain with G-Cter in SUMO2) cross-link. The interval 607–654 (RPRVCAPVEGKQQQRLKKSKDKGHSQGRLLSLLEQSEHRTTGVEKKPK) is disordered. A Phosphoserine modification is found at Ser637. The segment covering 641-654 (QSEHRTTGVEKKPK) has biased composition (basic and acidic residues). Lys652 is covalently cross-linked (Glycyl lysine isopeptide (Lys-Gly) (interchain with G-Cter in SUMO2)). 2 positions are modified to phosphoserine: Ser665 and Ser689. A Glycyl lysine isopeptide (Lys-Gly) (interchain with G-Cter in SUMO2) cross-link involves residue Lys708.

Belongs to the RAP80 family. In terms of assembly, component of the ARISC complex, at least composed of UIMC1/RAP80, ABRAXAS1, BRCC3/BRCC36, BABAM2 and BABAM1/NBA1. Component of the BRCA1-A complex, at least composed of the BRCA1, BARD1, UIMC1/RAP80, ABRAXAS1, BRCC3/BRCC36, BABAM2 and BABAM1/NBA1. In the BRCA1-A complex, interacts directly with ABRAXAS1. Interacts with ESR1. Interacts with UBE2I. Interacts with NR6A1. Interacts with TSP57. Interacts with TRAIP. In terms of processing, sumoylated. Phosphorylated upon DNA damage by ATM or ATR.

Its subcellular location is the nucleus. Functionally, ubiquitin-binding protein. Specifically recognizes and binds 'Lys-63'-linked ubiquitin. Plays a central role in the BRCA1-A complex by specifically binding 'Lys-63'-linked ubiquitinated histones H2A and H2AX at DNA lesions sites, leading to target the BRCA1-BARD1 heterodimer to sites of DNA damage at double-strand breaks (DSBs). The BRCA1-A complex also possesses deubiquitinase activity that specifically removes 'Lys-63'-linked ubiquitin on histones H2A and H2AX. Also weakly binds monoubiquitin but with much less affinity than 'Lys-63'-linked ubiquitin. May interact with monoubiquitinated histones H2A and H2B; the relevance of such results is however unclear in vivo. Does not bind Lys-48'-linked ubiquitin. May indirectly act as a transcriptional repressor by inhibiting the interaction of NR6A1 with the corepressor NCOR1. The sequence is that of BRCA1-A complex subunit RAP80 (Uimc1) from Mus musculus (Mouse).